A 398-amino-acid polypeptide reads, in one-letter code: Nonsense-mediated decay protein 4 (398 aa).

Positions 327–355 are disordered; the sequence is PVTSNYRGKNNRGRNNRGRRGNKRRERER. The span at 335–350 shows a compositional bias: basic residues; sequence KNNRGRNNRGRRGNKR.

The protein localises to the cytoplasm. Its function is as follows. Involved in nonsense-mediated decay of mRNAs containing premature stop codons. In Candida albicans (strain SC5314 / ATCC MYA-2876) (Yeast), this protein is Nonsense-mediated decay protein 4 (NMD4).